Consider the following 358-residue polypeptide: tRNA-specific 2-thiouridylase MnmA (358 aa).

ATP-binding positions include 8–15 and M34; that span reads GMSGGVDS. The active-site Nucleophile is the C103. C103 and C199 are disulfide-bonded. G127 lines the ATP pocket. The interaction with tRNA stretch occupies residues 149 to 151; that stretch reads KDQ. C199 functions as the Cysteine persulfide intermediate in the catalytic mechanism. Residues 305 to 306 are interaction with tRNA; the sequence is RY.

Belongs to the MnmA/TRMU family.

It localises to the cytoplasm. It catalyses the reaction S-sulfanyl-L-cysteinyl-[protein] + uridine(34) in tRNA + AH2 + ATP = 2-thiouridine(34) in tRNA + L-cysteinyl-[protein] + A + AMP + diphosphate + H(+). Functionally, catalyzes the 2-thiolation of uridine at the wobble position (U34) of tRNA, leading to the formation of s(2)U34. This chain is tRNA-specific 2-thiouridylase MnmA, found in Clostridium beijerinckii (strain ATCC 51743 / NCIMB 8052) (Clostridium acetobutylicum).